Here is a 177-residue protein sequence, read N- to C-terminus: Thymidine kinase (177 aa).

11–18 (GPMLSGKS) serves as a coordination point for ATP. The active-site Proton acceptor is E83. Residue F113 coordinates substrate. Residues C138 and C141 each contribute to the Zn(2+) site. Position 157 to 161 (157 to 161 (IEIIG)) interacts with substrate. 2 residues coordinate Zn(2+): C170 and C173.

The protein belongs to the thymidine kinase family. As to quaternary structure, homotetramer. Two molecules of substrate bind to each enzyme tetramer.

It catalyses the reaction thymidine + ATP = dTMP + ADP + H(+). In terms of biological role, phosphorylates thymidine and thymidine analogs, such as azidothymidine (AZT). Part of the salvage pathway for pyrimidine deoxyribonucleotide synthesis. This is Thymidine kinase (OPG101) from Monkeypox virus (strain Zaire-96-I-16) (MPX).